The primary structure comprises 199 residues: Recombination protein RecR (199 aa).

A C4-type zinc finger spans residues 57–72 (CNLCNNFSEQEICPLC). One can recognise a Toprim domain in the interval 80–175 (TLLCIVEMPS…QVSRIARGLP (96 aa)).

The protein belongs to the RecR family.

Functionally, may play a role in DNA repair. It seems to be involved in an RecBC-independent recombinational process of DNA repair. It may act with RecF and RecO. The protein is Recombination protein RecR of Methylobacillus flagellatus (strain ATCC 51484 / DSM 6875 / VKM B-1610 / KT).